A 355-amino-acid chain; its full sequence is Ribosomal RNA small subunit methyltransferase H (355 aa).

S-adenosyl-L-methionine is bound by residues 55–57 (GGH), Asp-75, Asp-122, and Gln-129. The interval 327–355 (ERTSQPLPATGAEDFVPAVPGAAEKGRRR) is disordered.

This sequence belongs to the methyltransferase superfamily. RsmH family.

It is found in the cytoplasm. It carries out the reaction cytidine(1402) in 16S rRNA + S-adenosyl-L-methionine = N(4)-methylcytidine(1402) in 16S rRNA + S-adenosyl-L-homocysteine + H(+). Functionally, specifically methylates the N4 position of cytidine in position 1402 (C1402) of 16S rRNA. The sequence is that of Ribosomal RNA small subunit methyltransferase H from Bordetella avium (strain 197N).